A 68-amino-acid chain; its full sequence is Small ribosomal subunit protein bS21 (68 aa).

The tract at residues Pro-39–Glu-68 is disordered. Residues Arg-54–Glu-68 are compositionally biased toward basic residues.

It belongs to the bacterial ribosomal protein bS21 family.

This chain is Small ribosomal subunit protein bS21, found in Orientia tsutsugamushi (strain Ikeda) (Rickettsia tsutsugamushi).